Reading from the N-terminus, the 101-residue chain is NAD(P)H-quinone oxidoreductase subunit 4L, chloroplastic (101 aa).

Transmembrane regions (helical) follow at residues 2 to 22, 32 to 52, and 61 to 81; these read IFEHALVLSAFLFSIGIYGLI, MCLELILNAVNINLVTFSDFF, and IFSIFVIAVAAAEAAIGPAIV.

This sequence belongs to the complex I subunit 4L family. In terms of assembly, NDH is composed of at least 16 different subunits, 5 of which are encoded in the nucleus.

The protein localises to the plastid. It is found in the chloroplast thylakoid membrane. It catalyses the reaction a plastoquinone + NADH + (n+1) H(+)(in) = a plastoquinol + NAD(+) + n H(+)(out). The enzyme catalyses a plastoquinone + NADPH + (n+1) H(+)(in) = a plastoquinol + NADP(+) + n H(+)(out). In terms of biological role, NDH shuttles electrons from NAD(P)H:plastoquinone, via FMN and iron-sulfur (Fe-S) centers, to quinones in the photosynthetic chain and possibly in a chloroplast respiratory chain. The immediate electron acceptor for the enzyme in this species is believed to be plastoquinone. Couples the redox reaction to proton translocation, and thus conserves the redox energy in a proton gradient. The polypeptide is NAD(P)H-quinone oxidoreductase subunit 4L, chloroplastic (Phaseolus vulgaris (Kidney bean)).